We begin with the raw amino-acid sequence, 202 residues long: Pyridoxal 5'-phosphate synthase subunit PdxT (202 aa).

49–51 (GES) provides a ligand contact to L-glutamine. The Nucleophile role is filled by C81. L-glutamine contacts are provided by residues R110 and 139-140 (IR). Active-site charge relay system residues include H182 and E184.

It belongs to the glutaminase PdxT/SNO family. In terms of assembly, in the presence of PdxS, forms a dodecamer of heterodimers. Only shows activity in the heterodimer.

The catalysed reaction is aldehydo-D-ribose 5-phosphate + D-glyceraldehyde 3-phosphate + L-glutamine = pyridoxal 5'-phosphate + L-glutamate + phosphate + 3 H2O + H(+). The enzyme catalyses L-glutamine + H2O = L-glutamate + NH4(+). Its pathway is cofactor biosynthesis; pyridoxal 5'-phosphate biosynthesis. Functionally, catalyzes the hydrolysis of glutamine to glutamate and ammonia as part of the biosynthesis of pyridoxal 5'-phosphate. The resulting ammonia molecule is channeled to the active site of PdxS. This is Pyridoxal 5'-phosphate synthase subunit PdxT from Rhodococcus opacus (strain B4).